Here is a 474-residue protein sequence, read N- to C-terminus: L-arabinose isomerase (474 aa).

Mn(2+)-binding residues include Glu-306, Glu-331, His-348, and His-447.

It belongs to the arabinose isomerase family. Mn(2+) is required as a cofactor.

The enzyme catalyses beta-L-arabinopyranose = L-ribulose. It participates in carbohydrate degradation; L-arabinose degradation via L-ribulose; D-xylulose 5-phosphate from L-arabinose (bacterial route): step 1/3. Functionally, catalyzes the conversion of L-arabinose to L-ribulose. The chain is L-arabinose isomerase from Oceanobacillus iheyensis (strain DSM 14371 / CIP 107618 / JCM 11309 / KCTC 3954 / HTE831).